A 37-amino-acid polypeptide reads, in one-letter code: uncharacterized protein (37 aa).

The interval 1 to 37 (MGQVEKARQGQFARPHHSDSQRRVRAWSRIQRRARSF) is disordered. Over residues 23–37 (RVRAWSRIQRRARSF) the composition is skewed to basic residues.

This is an uncharacterized protein from Bacillus phage phi105 (Bacteriophage phi-105).